The chain runs to 351 residues: Peroxisomal membrane protein PEX14 (351 aa).

A disordered region spans residues 54 to 75 (KARTGTVQASPSQQSVVPPRPP). A compositionally biased stretch (low complexity) spans 60-70 (VQASPSQQSVV). The SH3-binding motif lies at 83 to 91 (APPLPERDW). The segment at 243–351 (APQLSTPPSE…RGIPAWQLNA (109 aa)) is disordered. The span at 245 to 258 (QLSTPPSESTSRQS) shows a compositional bias: polar residues. Positions 283 to 293 (VLSREKDKDVN) are enriched in basic and acidic residues. Positions 294–303 (SDSIAQYEQR) are enriched in polar residues. Residues 320–334 (SASNGGSSTTSGVAG) are compositionally biased toward low complexity.

The protein belongs to the peroxin-14 family. In terms of assembly, interacts with PEX13 (via SH3 domain); forming the PEX13-PEX14 docking complex. Interacts with PEX5 (via WxxxF/Y motifs).

Its subcellular location is the peroxisome membrane. Its function is as follows. Component of the PEX13-PEX14 docking complex, a translocon channel that specifically mediates the import of peroxisomal cargo proteins bound to PEX5 receptor. The PEX13-PEX14 docking complex forms a large import pore which can be opened to a diameter of about 9 nm. Mechanistically, PEX5 receptor along with cargo proteins associates with the PEX14 subunit of the PEX13-PEX14 docking complex in the cytosol, leading to the insertion of the receptor into the organelle membrane with the concomitant translocation of the cargo into the peroxisome matrix. The sequence is that of Peroxisomal membrane protein PEX14 from Pichia angusta (Yeast).